The primary structure comprises 426 residues: Protein trichome birefringence-like 19 (426 aa).

A helical; Signal-anchor for type II membrane protein membrane pass occupies residues 15-35 (LLIAVTIATSLLTIIPLLYPL). The GDS motif motif lies at 142-144 (GDS). The DCXHWCLPGXXDXWN motif signature appears at 388 to 402 (DCVHWCLPGPIDNLN).

Belongs to the PC-esterase family. TBL subfamily.

It localises to the membrane. In terms of biological role, may act as a bridging protein that binds pectin and other cell wall polysaccharides. Probably involved in maintaining esterification of pectins. May be involved in the specific O-acetylation of cell wall polymers. This chain is Protein trichome birefringence-like 19 (TBL19), found in Arabidopsis thaliana (Mouse-ear cress).